We begin with the raw amino-acid sequence, 131 residues long: MLTDPIADYLTRIRNANTAFHETTEVPASGIKKALTEILKEEGFIRGFEVVDDGKQGKIRIYLKYGKNKERVITGLKRISKPGLRVYAGKEEVPRVLGGLGIAILSTSKGIMTDKEARKEGIGGEVICYIW.

The protein belongs to the universal ribosomal protein uS8 family. As to quaternary structure, part of the 30S ribosomal subunit. Contacts proteins S5 and S12.

One of the primary rRNA binding proteins, it binds directly to 16S rRNA central domain where it helps coordinate assembly of the platform of the 30S subunit. This is Small ribosomal subunit protein uS8 from Desulforudis audaxviator (strain MP104C).